Here is a 341-residue protein sequence, read N- to C-terminus: D-aspartate oxidase (341 aa).

Residues aspartate 36, lysine 37, threonine 43, serine 44, methionine 50, glycine 307, isoleucine 311, and serine 312 each coordinate FAD. The Microbody targeting signal motif lies at 339-341 (SNL).

This sequence belongs to the DAMOX/DASOX family. As to quaternary structure, monomer. Interacts with PEX5; the interaction is direct and required for localization of DDO to the peroxisome. Interacts with DAOA; the interaction is direct and increases the degradation rate of DDO. It depends on FAD as a cofactor. In terms of processing, may be S-nitrosylated. In terms of tissue distribution, expressed in epithelial cells of the proximal nephron tubules in the renal cortex (at protein level). In the brain, expressed in the frontal, temporal, and occipital lobes of the cortex, hippocampus, striatum, diencephalon, brainstem, cerebellum, spinal cord, plexus choroiderus and ependyma (at protein level). Expression is increased in the prefrontal cortex of schizophrenic patients. Levels are normal in the superior frontal gyrus of patients with Alzheimer's disease.

It localises to the peroxisome matrix. The protein localises to the cytoplasm. Its subcellular location is the cytosol. The catalysed reaction is D-aspartate + O2 + H2O = oxaloacetate + H2O2 + NH4(+). It catalyses the reaction D-glutamate + O2 + H2O = H2O2 + 2-oxoglutarate + NH4(+). Inhibited by the benzodiazepine olanzapine. Inhibited by aminooxyacetic acid, thiolactomycin, malonate and meso-tartrate. Clozapine, haloperidol and chlorpromazine have no effect on activity. Not inhibited by sodium, potassium, magnesium, iron, calcium, cobalt, copper, nickel, manganese or zinc ions. Not inhibited by AMP, ADP, ATP, or cAMP. Not inhibited by pyridoxal 5'-phosphate. Selectively catalyzes the oxidative deamination of acidic amino acids. Suppresses the level of D-aspartate in the brain, an amino acid that can act as an agonist for glutamate receptors. Protects the organism from the toxicity of D-amino acids. May also function in the intestine. This is D-aspartate oxidase (DDO) from Homo sapiens (Human).